A 359-amino-acid chain; its full sequence is Photosystem II protein D1 1 (359 aa).

Helical transmembrane passes span 29-46 (YVGWFGVLMIPTLLAATI), 118-133 (HFLIGIYAYMGREWEL), and 142-156 (WICVAYSAPVAAASA). His-118 contacts chlorophyll a. Residue Tyr-126 participates in pheophytin a binding. The [CaMn4O5] cluster site is built by Asp-170 and Glu-189. A helical membrane pass occupies residues 197 to 218 (FHMLGVAGVFGGSLFSAMHGSL). Position 198 (His-198) interacts with chlorophyll a. A quinone-binding positions include His-215 and 264–265 (SF). His-215 provides a ligand contact to Fe cation. His-272 contributes to the Fe cation binding site. A helical transmembrane segment spans residues 274-288 (FLAAWPVVGIWFTAL). The [CaMn4O5] cluster site is built by His-332, Glu-333, Asp-342, and Ala-344. Residues 345–359 (AAESTPVALQAPAIG) constitute a propeptide that is removed on maturation.

Belongs to the reaction center PufL/M/PsbA/D family. PSII is composed of 1 copy each of membrane proteins PsbA, PsbB, PsbC, PsbD, PsbE, PsbF, PsbH, PsbI, PsbJ, PsbK, PsbL, PsbM, PsbT, PsbX, PsbY, PsbZ, Psb30/Ycf12, peripheral proteins PsbO, CyanoQ (PsbQ), PsbU, PsbV and a large number of cofactors. It forms dimeric complexes. Requires The D1/D2 heterodimer binds P680, chlorophylls that are the primary electron donor of PSII, and subsequent electron acceptors. It shares a non-heme iron and each subunit binds pheophytin, quinone, additional chlorophylls, carotenoids and lipids. D1 provides most of the ligands for the Mn4-Ca-O5 cluster of the oxygen-evolving complex (OEC). There is also a Cl(-1) ion associated with D1 and D2, which is required for oxygen evolution. The PSII complex binds additional chlorophylls, carotenoids and specific lipids. as cofactor. Post-translationally, tyr-161 forms a radical intermediate that is referred to as redox-active TyrZ, YZ or Y-Z. In terms of processing, C-terminally processed by CtpA; processing is essential to allow assembly of the oxygen-evolving complex and thus photosynthetic growth.

It is found in the cellular thylakoid membrane. It carries out the reaction 2 a plastoquinone + 4 hnu + 2 H2O = 2 a plastoquinol + O2. Its function is as follows. Photosystem II (PSII) is a light-driven water:plastoquinone oxidoreductase that uses light energy to abstract electrons from H(2)O, generating O(2) and a proton gradient subsequently used for ATP formation. It consists of a core antenna complex that captures photons, and an electron transfer chain that converts photonic excitation into a charge separation. The D1/D2 (PsbA/PsbD) reaction center heterodimer binds P680, the primary electron donor of PSII as well as several subsequent electron acceptors. This Synechococcus sp. (strain CC9605) protein is Photosystem II protein D1 1.